A 637-amino-acid polypeptide reads, in one-letter code: Probable potassium transport system protein Kup (637 aa).

Helical transmembrane passes span 24–44 (LAIAAIGVVFGDIGTSPLYAL), 64–84 (VISLLFWAIILVVGIKYLLFV), 113–133 (AGALMALGIFGACMFYGDAVI), 151–171 (PHLSHLVLPITIVILIALFWI), 182–202 (LFGPIMVVWFVVIAALGVYHI), 225–245 (LLQAYVVLGSVVLVLTGAEAL), 261–281 (AYGLVMPSLVLNYFGQGALLI), 290–310 (PFFLLAPEWALLPLVVLSTVA), 351–371 (IYVPVVNWLLLFVILCIVIGF), 381–401 (YGIAVTATMVITTVLACVVMV), 409–429 (LLVGAIIAIFLAIDLGFFGAN), and 433–453 (VAQGGWLPLGIGALLFFLLMT).

It belongs to the HAK/KUP transporter (TC 2.A.72) family.

The protein localises to the cell inner membrane. The catalysed reaction is K(+)(in) + H(+)(in) = K(+)(out) + H(+)(out). In terms of biological role, transport of potassium into the cell. Likely operates as a K(+):H(+) symporter. The protein is Probable potassium transport system protein Kup of Burkholderia ambifaria (strain MC40-6).